The chain runs to 56 residues: Large ribosomal subunit protein bL32 (56 aa).

A disordered region spans residues 1–34 (MAVQQNKPTRSKRGMRRSHDALTTSTVSVDKASG).

Belongs to the bacterial ribosomal protein bL32 family.

This Sodalis glossinidius (strain morsitans) protein is Large ribosomal subunit protein bL32.